The sequence spans 431 residues: Tol-Pal system protein TolB (431 aa).

The first 26 residues, 1 to 26 (MSLMTKLGFRALVASCLITAGSAANA), serve as a signal peptide directing secretion. Positions 411–431 (PQILSVQGGSVREPSWGPFMQ) are disordered.

It belongs to the TolB family. The Tol-Pal system is composed of five core proteins: the inner membrane proteins TolA, TolQ and TolR, the periplasmic protein TolB and the outer membrane protein Pal. They form a network linking the inner and outer membranes and the peptidoglycan layer.

It localises to the periplasm. Part of the Tol-Pal system, which plays a role in outer membrane invagination during cell division and is important for maintaining outer membrane integrity. The chain is Tol-Pal system protein TolB from Burkholderia lata (strain ATCC 17760 / DSM 23089 / LMG 22485 / NCIMB 9086 / R18194 / 383).